Consider the following 496-residue polypeptide: Gamma-aminobutyric acid receptor subunit beta-like (496 aa).

The or 27 signal peptide spans 1–20 (MTCFTRVGVSCGLFFFLLGA). Residues 21–258 (QLQLIRCIRK…SFKLQRNIGY (238 aa)) are Extracellular-facing. Asn39 and Asn189 each carry an N-linked (GlcNAc...) asparagine glycan. A disulfide bond links Cys176 and Cys190. A run of 3 helical transmembrane segments spans residues 259–280 (FVFQ…SFWI), 285–306 (TSAR…STGV), and 318–342 (AIDI…AVNY). At 343-472 (TYWGKRAKKK…KIKDVNIIDK (130 aa)) the chain is on the cytoplasmic side. A helical membrane pass occupies residues 473–494 (YSRMIFPISFLAFNLGYWLFYI).

The protein belongs to the ligand-gated ion channel (TC 1.A.9) family. Gamma-aminobutyric acid receptor (TC 1.A.9.5) subfamily. In terms of assembly, generally pentameric. There are five types of GABA(A) receptor chains: alpha, beta, gamma, delta, and rho. Interacts with Grd (alpha chain).

The protein resides in the postsynaptic cell membrane. It is found in the cell membrane. In terms of biological role, GABA, an inhibitory neurotransmitter, mediates neuronal inhibition by binding to the GABA receptor and opening an integral chloride channel. Combines with the ligand-gated ion channel subunit GRD to form cation-selective GABA-gated ion channels when coexpressed in Xenopus laevis oocytes. The chain is Gamma-aminobutyric acid receptor subunit beta-like (Lcch3) from Drosophila melanogaster (Fruit fly).